We begin with the raw amino-acid sequence, 213 residues long: Viral dihydrofolate reductase (213 aa).

Positions 4-184 (LLNCIVAVDQ…IKYKFEVYEK (181 aa)) constitute a DHFR domain. Residues Ala10 and 16–22 (GIGKKGH) contribute to the NADP(+) site. 31 to 36 (DFKYFQ) provides a ligand contact to substrate. 54–56 (KNT) is an NADP(+) binding site. Arg70 contacts substrate. Residues 76–78 (SKK) and 116–123 (GGSSVYKD) contribute to the NADP(+) site.

The protein belongs to the dihydrofolate reductase family.

The catalysed reaction is (6S)-5,6,7,8-tetrahydrofolate + NADP(+) = 7,8-dihydrofolate + NADPH + H(+). The protein operates within cofactor biosynthesis; tetrahydrofolate biosynthesis; 5,6,7,8-tetrahydrofolate from 7,8-dihydrofolate: step 1/1. Functionally, key enzyme in folate metabolism. Catalyzes an essential reaction for de novo glycine and purine synthesis, and for DNA precursor synthesis. The protein is Viral dihydrofolate reductase (DHFR) of Saimiri sciureus (Common squirrel monkey).